We begin with the raw amino-acid sequence, 525 residues long: Endoglucanase 10 (525 aa).

Residues 1–26 form the signal peptide; that stretch reads MEEKSKSRGWCGWFIAIIVLASVILA. D109 (nucleophile) is an active-site residue. N-linked (GlcNAc...) asparagine glycosylation occurs at N259. H442 is an active-site residue. 2 N-linked (GlcNAc...) asparagine glycosylation sites follow: N464 and N484. Catalysis depends on residues D489 and E498.

This sequence belongs to the glycosyl hydrolase 9 (cellulase E) family.

It is found in the secreted. The enzyme catalyses Endohydrolysis of (1-&gt;4)-beta-D-glucosidic linkages in cellulose, lichenin and cereal beta-D-glucans.. This is Endoglucanase 10 from Arabidopsis thaliana (Mouse-ear cress).